Consider the following 934-residue polypeptide: Bifunctional uridylyltransferase/uridylyl-removing enzyme (934 aa).

Residues 1–379 (MSAHDLKLEE…TFSRRKRKLS (379 aa)) form a uridylyltransferase region. Positions 380 to 736 (DDGAFISENH…AKPHAFEAVT (357 aa)) are uridylyl-removing. The HD domain maps to 496 to 613 (VDEHLLRCIA…IDFADTVQTM (118 aa)). ACT domains lie at 737–818 (EITV…DMLA) and 848–931 (VIEV…RSPQ).

The protein belongs to the GlnD family. Requires Mg(2+) as cofactor.

The enzyme catalyses [protein-PII]-L-tyrosine + UTP = [protein-PII]-uridylyl-L-tyrosine + diphosphate. It catalyses the reaction [protein-PII]-uridylyl-L-tyrosine + H2O = [protein-PII]-L-tyrosine + UMP + H(+). With respect to regulation, uridylyltransferase (UTase) activity is inhibited by glutamine, while glutamine activates uridylyl-removing (UR) activity. Its function is as follows. Modifies, by uridylylation and deuridylylation, the PII regulatory proteins (GlnB and homologs), in response to the nitrogen status of the cell that GlnD senses through the glutamine level. Under low glutamine levels, catalyzes the conversion of the PII proteins and UTP to PII-UMP and PPi, while under higher glutamine levels, GlnD hydrolyzes PII-UMP to PII and UMP (deuridylylation). Thus, controls uridylylation state and activity of the PII proteins, and plays an important role in the regulation of nitrogen assimilation and metabolism. This chain is Bifunctional uridylyltransferase/uridylyl-removing enzyme, found in Brucella melitensis biotype 2 (strain ATCC 23457).